A 308-amino-acid polypeptide reads, in one-letter code: Paired box protein 3 homolog (308 aa).

The paired DNA-binding region spans 13–140 (GQGRVNQLGG…PAIKRLIGNK (128 aa)). The interval 16-72 (RVNQLGGVFINGRPLPIHVRHAIISMAKKGIKPCHISRQLKVSHGAVSKILNRYAET) is PAI subdomain. The RED subdomain stretch occupies residues 92-140 (AVEKEILIACDENPQMSAAELRDWLIHKDICTKGNAPTVPAIKRLIGNK). Positions 168–191 (CSKSSSDDEEGSSPSNDASSRRNR) are disordered. Residues 187 to 246 (SRRNRTSFTAEQLDVLENAFRADTYPHANARESISKETGLSEEKIMTWFSNRRARCRKNM) constitute a DNA-binding region (homeobox).

It belongs to the paired homeobox family.

It localises to the nucleus. In terms of biological role, transcriptional activator. Regulates the lateral/ventral epidermal cell fate decision. This chain is Paired box protein 3 homolog, found in Caenorhabditis elegans.